The chain runs to 385 residues: 8-amino-7-oxononanoate synthase (385 aa).

Arg-21 lines the substrate pocket. Residue 108–109 participates in pyridoxal 5'-phosphate binding; the sequence is GF. His-133 lines the substrate pocket. Pyridoxal 5'-phosphate is bound by residues Ser-179, His-207, and Thr-233. Lys-236 carries the N6-(pyridoxal phosphate)lysine modification. Thr-352 serves as a coordination point for substrate.

It belongs to the class-II pyridoxal-phosphate-dependent aminotransferase family. BioF subfamily. In terms of assembly, homodimer. Pyridoxal 5'-phosphate is required as a cofactor.

The enzyme catalyses 6-carboxyhexanoyl-[ACP] + L-alanine + H(+) = (8S)-8-amino-7-oxononanoate + holo-[ACP] + CO2. It participates in cofactor biosynthesis; biotin biosynthesis. Functionally, catalyzes the decarboxylative condensation of pimeloyl-[acyl-carrier protein] and L-alanine to produce 8-amino-7-oxononanoate (AON), [acyl-carrier protein], and carbon dioxide. This Salmonella choleraesuis (strain SC-B67) protein is 8-amino-7-oxononanoate synthase.